A 290-amino-acid chain; its full sequence is tRNA-cytidine(32) 2-sulfurtransferase (290 aa).

Positions 66 to 71 match the PP-loop motif motif; sequence SGGKDS. [4Fe-4S] cluster contacts are provided by C141, C144, and C232.

The protein belongs to the TtcA family. Homodimer. It depends on Mg(2+) as a cofactor. Requires [4Fe-4S] cluster as cofactor.

The protein localises to the cytoplasm. It carries out the reaction cytidine(32) in tRNA + S-sulfanyl-L-cysteinyl-[cysteine desulfurase] + AH2 + ATP = 2-thiocytidine(32) in tRNA + L-cysteinyl-[cysteine desulfurase] + A + AMP + diphosphate + H(+). It participates in tRNA modification. In terms of biological role, catalyzes the ATP-dependent 2-thiolation of cytidine in position 32 of tRNA, to form 2-thiocytidine (s(2)C32). The sulfur atoms are provided by the cysteine/cysteine desulfurase (IscS) system. The protein is tRNA-cytidine(32) 2-sulfurtransferase of Rhizobium etli (strain ATCC 51251 / DSM 11541 / JCM 21823 / NBRC 15573 / CFN 42).